The chain runs to 222 residues: UPF0758 protein YPN_3801 (222 aa).

One can recognise an MPN domain in the interval 100 to 222 (VLLNPGITQK…CVSFAERGWL (123 aa)). 3 residues coordinate Zn(2+): H171, H173, and D184. The JAMM motif motif lies at 171 to 184 (HNHPSGKAEPSQAD).

The protein belongs to the UPF0758 family. YicR subfamily.

The sequence is that of UPF0758 protein YPN_3801 from Yersinia pestis bv. Antiqua (strain Nepal516).